The following is a 539-amino-acid chain: MASRIINHSKKLKHVSALLRRDHAVAVRCFSNSTHPSLVGREDIFKARLNYSSVERISKCGTGNVTMLSGISTTSTKLSSPMAGPKLFKEFISSQMRSVRGFSSSSDLPPHQEIGMPSLSPTMTEGNIARWLKKEGDKVAPGEVLCEVETDKATVEMECMEEGFLAKIVKEEGAKEIQVGEVIAITVEDEDDIQKFKDYTPSSDTGPAAPEAKPAPSLPKEEKVEKPASAPEAKISKPSSAPSEDRIFASPLARKLAEDNNVPLSSIKGTGPEGRIVKADVEDFLASGSKETTAKPSKQVDSKVPALDYVDIPHTQIRKVTASRLAFSKQTIPHYYLTVDTCVDKMMGLRSQLNSFQEASGGKRISVNDLVIKAAALALRKVPQCNSSWTDEYIRQFKNVNINVAVQTENGLYVPVVKDADKKGLSTIGEEVRFLAQKAKENSLKPEDYEGGTFTVSNLGGPFGIKQFCAVINPPQAAILAIGSAEKRVVPGTGPDQYNVASYMSVTLSCDHRVIDGAIGAEWLKAFKGYIETPESMLL.

The transit peptide at 1-102 (MASRIINHSK…SSQMRSVRGF (102 aa)) directs the protein to the mitochondrion. The segment at 102–122 (FSSSSDLPPHQEIGMPSLSPT) is disordered. A Lipoyl-binding domain is found at 111 to 187 (HQEIGMPSLS…QVGEVIAITV (77 aa)). An N6-lipoyllysine modification is found at lysine 152. The segment at 196 to 244 (FKDYTPSSDTGPAAPEAKPAPSLPKEEKVEKPASAPEAKISKPSSAPSE) is disordered. The Peripheral subunit-binding (PSBD) domain maps to 248–285 (FASPLARKLAEDNNVPLSSIKGTGPEGRIVKADVEDFL). Active-site residues include histidine 512 and aspartate 516.

This sequence belongs to the 2-oxoacid dehydrogenase family. The cofactor is (R)-lipoate.

It is found in the mitochondrion matrix. The enzyme catalyses N(6)-[(R)-dihydrolipoyl]-L-lysyl-[protein] + acetyl-CoA = N(6)-[(R)-S(8)-acetyldihydrolipoyl]-L-lysyl-[protein] + CoA. Its function is as follows. The pyruvate dehydrogenase complex catalyzes the overall conversion of pyruvate to acetyl-CoA and CO(2). It contains multiple copies of three enzymatic components: pyruvate dehydrogenase (E1), dihydrolipoamide acetyltransferase (E2) and lipoamide dehydrogenase (E3). This chain is Dihydrolipoyllysine-residue acetyltransferase component 2 of pyruvate dehydrogenase complex, mitochondrial, found in Arabidopsis thaliana (Mouse-ear cress).